The sequence spans 297 residues: Protein phosphatase PTC7 homolog (297 aa).

A mitochondrion-targeting transit peptide spans 1-27 (MFSVLSCGRLVARAVFGGLSQTDSRDY). In terms of domain architecture, PPM-type phosphatase spans 28–292 (SLVTASCGFG…DDITVLLSIV (265 aa)). Mn(2+) contacts are provided by Asp-71, Gly-72, and Asp-216.

It belongs to the PP2C family. Requires Mg(2+) as cofactor. Mn(2+) is required as a cofactor.

It localises to the mitochondrion matrix. The enzyme catalyses O-phospho-L-seryl-[protein] + H2O = L-seryl-[protein] + phosphate. It carries out the reaction O-phospho-L-threonyl-[protein] + H2O = L-threonyl-[protein] + phosphate. Its function is as follows. Protein phosphatase which positively regulates biosynthesis of the ubiquinone, coenzyme Q. Dephosphorylates the ubiquinone biosynthesis protein coq7 which is likely to lead to its activation. The sequence is that of Protein phosphatase PTC7 homolog (pptc7) from Xenopus laevis (African clawed frog).